The chain runs to 224 residues: Small ribosomal subunit protein uS3c (224 aa).

In terms of domain architecture, KH type-2 spans 43 to 124 (IKNYIQKNRK…RLNIAIEKVK (82 aa)).

It belongs to the universal ribosomal protein uS3 family. Part of the 30S ribosomal subunit.

It is found in the plastid. Its subcellular location is the chloroplast. The sequence is that of Small ribosomal subunit protein uS3c (rps3) from Saccharum hybrid (Sugarcane).